The chain runs to 532 residues: CTP synthase (532 aa).

Residues 1-268 (MTTKYIFVTG…DEIVCDHLNL (268 aa)) are amidoligase domain. Residue Ser14 participates in CTP binding. Ser14 provides a ligand contact to UTP. 15–20 (SLGKGI) is an ATP binding site. L-glutamine is bound at residue Tyr55. Asp72 serves as a coordination point for ATP. Mg(2+)-binding residues include Asp72 and Glu142. Residues 149 to 151 (DIE), 189 to 194 (KSKPTQ), and Lys225 each bind CTP. Residues 189 to 194 (KSKPTQ) and Lys225 each bind UTP. 241–243 (RDA) provides a ligand contact to ATP. The 240-residue stretch at 293–532 (KIALVGKYVA…REFIQASLRK (240 aa)) folds into the Glutamine amidotransferase type-1 domain. Gly355 is a binding site for L-glutamine. Cys382 acts as the Nucleophile; for glutamine hydrolysis in catalysis. Residues 383–386 (LGMQ), Glu406, and Arg463 each bind L-glutamine. Residues His508 and Glu510 contribute to the active site.

The protein belongs to the CTP synthase family. In terms of assembly, homotetramer.

It carries out the reaction UTP + L-glutamine + ATP + H2O = CTP + L-glutamate + ADP + phosphate + 2 H(+). The enzyme catalyses L-glutamine + H2O = L-glutamate + NH4(+). It catalyses the reaction UTP + NH4(+) + ATP = CTP + ADP + phosphate + 2 H(+). The protein operates within pyrimidine metabolism; CTP biosynthesis via de novo pathway; CTP from UDP: step 2/2. Allosterically activated by GTP, when glutamine is the substrate; GTP has no effect on the reaction when ammonia is the substrate. The allosteric effector GTP functions by stabilizing the protein conformation that binds the tetrahedral intermediate(s) formed during glutamine hydrolysis. Inhibited by the product CTP, via allosteric rather than competitive inhibition. Catalyzes the ATP-dependent amination of UTP to CTP with either L-glutamine or ammonia as the source of nitrogen. Regulates intracellular CTP levels through interactions with the four ribonucleotide triphosphates. This chain is CTP synthase, found in Halalkalibacterium halodurans (strain ATCC BAA-125 / DSM 18197 / FERM 7344 / JCM 9153 / C-125) (Bacillus halodurans).